Here is a 303-residue protein sequence, read N- to C-terminus: 1D-myo-inositol 2-acetamido-2-deoxy-alpha-D-glucopyranoside deacetylase (303 aa).

Positions 15, 18, and 157 each coordinate Zn(2+).

Belongs to the MshB deacetylase family. It depends on Zn(2+) as a cofactor.

It catalyses the reaction 1D-myo-inositol 2-acetamido-2-deoxy-alpha-D-glucopyranoside + H2O = 1D-myo-inositol 2-amino-2-deoxy-alpha-D-glucopyranoside + acetate. In terms of biological role, catalyzes the deacetylation of 1D-myo-inositol 2-acetamido-2-deoxy-alpha-D-glucopyranoside (GlcNAc-Ins) in the mycothiol biosynthesis pathway. The sequence is that of 1D-myo-inositol 2-acetamido-2-deoxy-alpha-D-glucopyranoside deacetylase from Kribbella flavida (strain DSM 17836 / JCM 10339 / NBRC 14399).